Reading from the N-terminus, the 205-residue chain is Holliday junction branch migration complex subunit RuvA (205 aa).

A domain I region spans residues 1–64 (MIGRLRGIIL…EDAQLLFGFI (64 aa)). Residues 65–143 (HKQERVLFRE…GLSGDLFVPQ (79 aa)) are domain II. The tract at residues 144–156 (GAGEIPAAIDAPA) is flexible linker. Positions 157–205 (MPADPEGEAVAALVALGYKPQEASRMVSKVASAGSDCEMLIRDALRAAL) are domain III.

This sequence belongs to the RuvA family. Homotetramer. Forms an RuvA(8)-RuvB(12)-Holliday junction (HJ) complex. HJ DNA is sandwiched between 2 RuvA tetramers; dsDNA enters through RuvA and exits via RuvB. An RuvB hexamer assembles on each DNA strand where it exits the tetramer. Each RuvB hexamer is contacted by two RuvA subunits (via domain III) on 2 adjacent RuvB subunits; this complex drives branch migration. In the full resolvosome a probable DNA-RuvA(4)-RuvB(12)-RuvC(2) complex forms which resolves the HJ.

It localises to the cytoplasm. The RuvA-RuvB-RuvC complex processes Holliday junction (HJ) DNA during genetic recombination and DNA repair, while the RuvA-RuvB complex plays an important role in the rescue of blocked DNA replication forks via replication fork reversal (RFR). RuvA specifically binds to HJ cruciform DNA, conferring on it an open structure. The RuvB hexamer acts as an ATP-dependent pump, pulling dsDNA into and through the RuvAB complex. HJ branch migration allows RuvC to scan DNA until it finds its consensus sequence, where it cleaves and resolves the cruciform DNA. The protein is Holliday junction branch migration complex subunit RuvA of Sodalis glossinidius (strain morsitans).